We begin with the raw amino-acid sequence, 285 residues long: 2-dehydro-3-deoxyphosphooctonate aldolase (285 aa).

This sequence belongs to the KdsA family.

It localises to the cytoplasm. The enzyme catalyses D-arabinose 5-phosphate + phosphoenolpyruvate + H2O = 3-deoxy-alpha-D-manno-2-octulosonate-8-phosphate + phosphate. Its pathway is carbohydrate biosynthesis; 3-deoxy-D-manno-octulosonate biosynthesis; 3-deoxy-D-manno-octulosonate from D-ribulose 5-phosphate: step 2/3. The protein operates within bacterial outer membrane biogenesis; lipopolysaccharide biosynthesis. This chain is 2-dehydro-3-deoxyphosphooctonate aldolase, found in Bordetella bronchiseptica (strain ATCC BAA-588 / NCTC 13252 / RB50) (Alcaligenes bronchisepticus).